The chain runs to 514 residues: 2-isopropylmalate synthase (514 aa).

The region spanning 5 to 268 (LIIFDTTLRD…DVGIDTTQIV (264 aa)) is the Pyruvate carboxyltransferase domain. 4 residues coordinate Mn(2+): aspartate 14, histidine 202, histidine 204, and asparagine 239. Residues 395–514 (KFVSLSQHSE…KDDKLNPQRA (120 aa)) form a regulatory domain region.

It belongs to the alpha-IPM synthase/homocitrate synthase family. LeuA type 1 subfamily. Homodimer. Mn(2+) is required as a cofactor.

It is found in the cytoplasm. The catalysed reaction is 3-methyl-2-oxobutanoate + acetyl-CoA + H2O = (2S)-2-isopropylmalate + CoA + H(+). It participates in amino-acid biosynthesis; L-leucine biosynthesis; L-leucine from 3-methyl-2-oxobutanoate: step 1/4. Functionally, catalyzes the condensation of the acetyl group of acetyl-CoA with 3-methyl-2-oxobutanoate (2-ketoisovalerate) to form 3-carboxy-3-hydroxy-4-methylpentanoate (2-isopropylmalate). In Burkholderia vietnamiensis (strain G4 / LMG 22486) (Burkholderia cepacia (strain R1808)), this protein is 2-isopropylmalate synthase.